Consider the following 248-residue polypeptide: 2,3-bisphosphoglycerate-dependent phosphoglycerate mutase (248 aa).

Substrate contacts are provided by residues 8–15, 21–22, Arg60, 87–90, Lys98, 114–115, and 183–184; these read RHGESTWN, TG, ERHY, RR, and GN. The active-site Tele-phosphohistidine intermediate is His9. Glu87 functions as the Proton donor/acceptor in the catalytic mechanism.

This sequence belongs to the phosphoglycerate mutase family. BPG-dependent PGAM subfamily. In terms of assembly, homodimer.

The catalysed reaction is (2R)-2-phosphoglycerate = (2R)-3-phosphoglycerate. It functions in the pathway carbohydrate degradation; glycolysis; pyruvate from D-glyceraldehyde 3-phosphate: step 3/5. Functionally, catalyzes the interconversion of 2-phosphoglycerate and 3-phosphoglycerate. The sequence is that of 2,3-bisphosphoglycerate-dependent phosphoglycerate mutase from Cupriavidus pinatubonensis (strain JMP 134 / LMG 1197) (Cupriavidus necator (strain JMP 134)).